An 836-amino-acid polypeptide reads, in one-letter code: Protein AKNAD1 (836 aa).

Composition is skewed to polar residues over residues 159-172 (SWPKEQTPELTDQL), 181-192 (SNKPGSATTTEE), and 227-248 (SYQGQSPQKQQTEKANSGNTFK). Disordered regions lie at residues 159–248 (SWPK…NTFK) and 303–325 (LETTPESNCVEKQHQEQKGKITE). The span at 311–323 (CVEKQHQEQKGKI) shows a compositional bias: basic and acidic residues. The stretch at 372–484 (QKISQGKQMC…DVKEKMDESK (113 aa)) forms a coiled coil. Disordered regions lie at residues 510-545 (SNEIPKEHPGHPSGPRGSGGSEVTGTPQGGPQEAPN) and 575-596 (MRLSSNSGEDPNGTPRRQDCAE).

This sequence belongs to the AKNA family.

This chain is Protein AKNAD1 (AKNAD1), found in Homo sapiens (Human).